A 277-amino-acid polypeptide reads, in one-letter code: MTKARIDARFAELAREGRAAFVPYVMAGDPDRETALAILKGLPAAGADIIELGFPFSDPMAEGPPIQRAAGRALAKGMTLQGVLDLVRAFRAGDATTPLILMGYMNPLVTWGLEAFARDASDAGVDGLIIVDCPPEEADPLADALDAAGVSLIRLATPTTGDARLKVVVRRTSGFVYYVSVAGVTGVKEADAAAVAPNVERVRKASGLPVAVGFGIKTPERAAQVAQVADAVVVGSALVDEVAEAVDMNEDVTARVLSKVESLAKAVRLARRSHEAV.

Active-site proton acceptor residues include Glu51 and Glu62.

The protein belongs to the TrpA family. Tetramer of two alpha and two beta chains.

The catalysed reaction is (1S,2R)-1-C-(indol-3-yl)glycerol 3-phosphate + L-serine = D-glyceraldehyde 3-phosphate + L-tryptophan + H2O. It participates in amino-acid biosynthesis; L-tryptophan biosynthesis; L-tryptophan from chorismate: step 5/5. Its function is as follows. The alpha subunit is responsible for the aldol cleavage of indoleglycerol phosphate to indole and glyceraldehyde 3-phosphate. This is Tryptophan synthase alpha chain from Phenylobacterium zucineum (strain HLK1).